An 821-amino-acid polypeptide reads, in one-letter code: DNA gyrase subunit A (821 aa).

A Topo IIA-type catalytic domain is found at 35-500 (LPDVRDGLKP…GLETIEDEDL (466 aa)). Catalysis depends on Tyr-123, which acts as the O-(5'-phospho-DNA)-tyrosine intermediate. Residues 527–533 (QKRGGKG) carry the GyrA-box motif.

This sequence belongs to the type II topoisomerase GyrA/ParC subunit family. Heterotetramer, composed of two GyrA and two GyrB chains. In the heterotetramer, GyrA contains the active site tyrosine that forms a transient covalent intermediate with DNA, while GyrB binds cofactors and catalyzes ATP hydrolysis.

Its subcellular location is the cytoplasm. It catalyses the reaction ATP-dependent breakage, passage and rejoining of double-stranded DNA.. A type II topoisomerase that negatively supercoils closed circular double-stranded (ds) DNA in an ATP-dependent manner to modulate DNA topology and maintain chromosomes in an underwound state. Negative supercoiling favors strand separation, and DNA replication, transcription, recombination and repair, all of which involve strand separation. Also able to catalyze the interconversion of other topological isomers of dsDNA rings, including catenanes and knotted rings. Type II topoisomerases break and join 2 DNA strands simultaneously in an ATP-dependent manner. This is DNA gyrase subunit A from Bacillus subtilis (strain 168).